Consider the following 279-residue polypeptide: Urease accessory protein UreD (279 aa).

Belongs to the UreD family. UreD, UreF and UreG form a complex that acts as a GTP-hydrolysis-dependent molecular chaperone, activating the urease apoprotein by helping to assemble the nickel containing metallocenter of UreC. The UreE protein probably delivers the nickel.

The protein localises to the cytoplasm. In terms of biological role, required for maturation of urease via the functional incorporation of the urease nickel metallocenter. The sequence is that of Urease accessory protein UreD from Streptococcus thermophilus (strain ATCC BAA-250 / LMG 18311).